Here is a 421-residue protein sequence, read N- to C-terminus: 4-hydroxy-3-methylbut-2-en-1-yl diphosphate synthase (flavodoxin) (421 aa).

[4Fe-4S] cluster contacts are provided by Cys300, Cys303, Cys346, and Glu353.

This sequence belongs to the IspG family. Requires [4Fe-4S] cluster as cofactor.

The enzyme catalyses (2E)-4-hydroxy-3-methylbut-2-enyl diphosphate + oxidized [flavodoxin] + H2O + 2 H(+) = 2-C-methyl-D-erythritol 2,4-cyclic diphosphate + reduced [flavodoxin]. Its pathway is isoprenoid biosynthesis; isopentenyl diphosphate biosynthesis via DXP pathway; isopentenyl diphosphate from 1-deoxy-D-xylulose 5-phosphate: step 5/6. Its function is as follows. Converts 2C-methyl-D-erythritol 2,4-cyclodiphosphate (ME-2,4cPP) into 1-hydroxy-2-methyl-2-(E)-butenyl 4-diphosphate. This is 4-hydroxy-3-methylbut-2-en-1-yl diphosphate synthase (flavodoxin) from Laribacter hongkongensis (strain HLHK9).